The primary structure comprises 367 residues: MDDAAVLKRRGYLLGINLGEGSYAKVKSAYSERLKFNVAIKIIDRKKAPADFLEKFLPREIEILAMLNHCSIIKTYEIFETSHGKVYIVMELAVQGDLLELIKTRGALHEDEARKKFHQLSLAIKYCHDLDVVHRDLKCDNLLLDKDFNIKLSDFSFSKRCLRDDSGRMALSKTFCGSPAYAAPEVLQGIPYQPKVYDIWSLGVILYIMVCGSMPYDDSNIKKMLRIQKEHRVNFPRSKHLTGECKDLIYHMLQPDVNRRLHIDEILSHCWMQPKARGSPSVAINKEGESSRGTEPLWTPEPGSDKKSATKLEPEGEAQPQAQPETKPEGTAMQMSRQSEILGFPSKPSTMETEEGPPQQPPETRAQ.

The Protein kinase domain occupies 12-272 (YLLGINLGEG…IDEILSHCWM (261 aa)). ATP is bound by residues 18 to 26 (LGEGSYAKV) and lysine 41. Aspartate 136 acts as the Proton acceptor in catalysis. At threonine 174 the chain carries Phosphothreonine. The segment at 276–367 (ARGSPSVAIN…PQQPPETRAQ (92 aa)) is disordered. The span at 303 to 314 (GSDKKSATKLEP) shows a compositional bias: basic and acidic residues.

The protein belongs to the protein kinase superfamily. CAMK Ser/Thr protein kinase family. In terms of assembly, interacts with TSSK2. Interacts with HSP90; this interaction stabilizes TSSK1. Mg(2+) is required as a cofactor. Post-translationally, autophosphorylated. In terms of processing, ubiquitinated; HSP90 activity negatively regulates ubiquitination and degradation. In terms of tissue distribution, testis-specific. Present in sperm (at protein level).

The protein localises to the cytoplasm. Its subcellular location is the cytoplasmic vesicle. It is found in the secretory vesicle. It localises to the acrosome. The protein resides in the cell projection. The protein localises to the cilium. Its subcellular location is the flagellum. It catalyses the reaction L-seryl-[protein] + ATP = O-phospho-L-seryl-[protein] + ADP + H(+). It carries out the reaction L-threonyl-[protein] + ATP = O-phospho-L-threonyl-[protein] + ADP + H(+). Its activity is regulated as follows. Kinase activity is specifically inhibited by 2 classes of compounds: biphenyl compounds (1,1'-(biphenyl-4,4'-diyl)bis(2,2-dihydroxyethanone)) and 1,2,7-trialky-1H-imidazo[4,5-g]quinoxalin-6-one. Activated by phosphorylation on Thr-174 and potentially by autophosphorylation. Testis-specific serine/threonine-protein kinase required during spermatid development. Phosphorylates 'Ser-288' of TSKS. Involved in the late stages of spermatogenesis, during the reconstruction of the cytoplasm. During spermatogenesis, required for the transformation of a ring-shaped structure around the base of the flagellum originating from the chromatoid body. This Homo sapiens (Human) protein is Testis-specific serine/threonine-protein kinase 1 (TSSK1B).